The primary structure comprises 153 residues: Putative adenylate kinase (153 aa).

ATP contacts are provided by Gly12, Gly14, Lys15, Ser16, and Thr17. Positions 31-47 are NMP; sequence EGNELAKEYGCLFDEEV. Residues 94–104 form an LID region; sequence ARGYSEEKIQE. Arg95 contributes to the ATP binding site.

Belongs to the adenylate kinase family. AK6 subfamily. Interacts with uS11. Not a structural component of 40S pre-ribosomes, but transiently interacts with them by binding to uS11.

It carries out the reaction AMP + ATP = 2 ADP. The enzyme catalyses ATP + H2O = ADP + phosphate + H(+). Broad-specificity nucleoside monophosphate (NMP) kinase that catalyzes the reversible transfer of the terminal phosphate group between nucleoside triphosphates and monophosphates. Also has ATPase activity. Involved in the late maturation steps of the 30S ribosomal particles, specifically 16S rRNA maturation. While NMP activity is not required for ribosome maturation, ATPase activity is. Associates transiently with small ribosomal subunit protein uS11. ATP hydrolysis breaks the interaction with uS11. May temporarily remove uS11 from the ribosome to enable a conformational change of the ribosomal RNA that is needed for the final maturation step of the small ribosomal subunit. This is Putative adenylate kinase from Thermoplasma volcanium (strain ATCC 51530 / DSM 4299 / JCM 9571 / NBRC 15438 / GSS1).